A 740-amino-acid chain; its full sequence is MSSAVRIVEKQLDEILAIAKNPAQIRNAGTLAHVDHGKTTTSDSLLMGAGLLSPKVAGKALAMDYVPIEQLRQMTVKAANISLYFEYGGKPYLINFVDTPGHVDFTGHVTRSLRVMDGGLVVVDAVEGVMTQTETVVRQALEEYVRPVLFINKIDRLIKELRLSPQEIQQRILTIVKDFNALIDMFAPPEFKDKWKIDPGKGQMALGSALHKWGITIPMAQKAGIKFSNIVDAYEKGYVDQLAQEFPLYKTILSMIIEHIPPPNVAQKYRIPRLWRGELNSEVGKALLEADPNGPTVIAVSKVNKDPHAGLIATGRVFSGTIREGDEVYIIGRRLKKKVLQTYIYMGPSRIIVPYMPAGNIVALMGVDEARAGDTLVDPKFSEIPPFEKMRYISEPVVTVAIEPKNPAELARLVEALKDLVVEDPTLDLKIDQETGQILLSGVGTLHLEIATWLLKERTKTEFTVSPPLIRFRETVRERSQVWEGKSPNKHNRLYFYVEPLDETTIELIASREITEDQEPRERAKILREKAGWDTDEARGIWAIDDRYFNVIVDKTSGIQYLREIRDYIVQGFRWSMEAGPLAQEPMRGVKVVLVDAVVHEDPAHRGPAQIMPATKNAIFAAVLSARPTLLEPLMRLDIKVAPDYIGAVTSVLNKHRGKILDMTQQEYMAFLRAELPVLESFNISDELRAAAAGKIFWSMQFARWAPFPESMLGDFVKQLRKKKGLKEEIPKPTDFVEVY.

Residues 23–264 (AQIRNAGTLA…MIIEHIPPPN (242 aa)) form the tr-type G domain. GTP-binding positions include 32–39 (AHVDHGKT), 98–102 (DTPGH), and 152–155 (NKID). His605 bears the Diphthamide mark.

Belongs to the TRAFAC class translation factor GTPase superfamily. Classic translation factor GTPase family. EF-G/EF-2 subfamily.

The protein localises to the cytoplasm. In terms of biological role, catalyzes the GTP-dependent ribosomal translocation step during translation elongation. During this step, the ribosome changes from the pre-translocational (PRE) to the post-translocational (POST) state as the newly formed A-site-bound peptidyl-tRNA and P-site-bound deacylated tRNA move to the P and E sites, respectively. Catalyzes the coordinated movement of the two tRNA molecules, the mRNA and conformational changes in the ribosome. The protein is Elongation factor 2 of Pyrobaculum aerophilum (strain ATCC 51768 / DSM 7523 / JCM 9630 / CIP 104966 / NBRC 100827 / IM2).